The following is a 347-amino-acid chain: MALDALASILETVLRNCGINEISRVTTKFEEALDDCGMKVDDWREAYYKERFPKRMTATTMASQIMNFEIENLQLRNKAWAEGADRKFRLLSSFEIGNKDGHTILVPKTRNAEILLANSTSDLKLSSFPSEAVAKLAEENEKMRKQIEHLREQQTSKSTATLCEALENMTERMKLIEREKETVRRMFLECDKTNQRLRKQIQICEEEATDRLVLVNSHHREEILIMKREIYRLQMENVTLKEQIDSIEQELDHSNRIVRGLANRAGLVVDEVDSGNETSDLSDDSDHDDHENSESDLEDMMDPGEDERIPRGGENPRRQARMLQMREEMERLHEDMEILNLNLDLDI.

Positions 230 to 257 (IYRLQMENVTLKEQIDSIEQELDHSNRI) form a coiled coil. 2 stretches are compositionally biased toward acidic residues: residues 274-286 (SGNE…DDSD) and 294-305 (ESDLEDMMDPGE). The interval 274 to 321 (SGNETSDLSDDSDHDDHENSESDLEDMMDPGEDERIPRGGENPRRQAR) is disordered. The span at 306-317 (DERIPRGGENPR) shows a compositional bias: basic and acidic residues.

The protein belongs to the rotavirus NSP3 family.

The protein resides in the host cytoplasm. Its function is as follows. May play a role in stimulating the translation of viral mRNAs. In Homo sapiens (Human), this protein is Non-structural protein 3.